A 239-amino-acid chain; its full sequence is tRNA1(Val) (adenine(37)-N6)-methyltransferase (239 aa).

It belongs to the methyltransferase superfamily. tRNA (adenine-N(6)-)-methyltransferase family.

The protein localises to the cytoplasm. The catalysed reaction is adenosine(37) in tRNA1(Val) + S-adenosyl-L-methionine = N(6)-methyladenosine(37) in tRNA1(Val) + S-adenosyl-L-homocysteine + H(+). Specifically methylates the adenine in position 37 of tRNA(1)(Val) (anticodon cmo5UAC). This Vibrio vulnificus (strain CMCP6) protein is tRNA1(Val) (adenine(37)-N6)-methyltransferase.